A 446-amino-acid chain; its full sequence is Tetratricopeptide repeat protein 23 (446 aa).

TPR repeat units follow at residues 45 to 78 (LRLS…TRIC), 137 to 170 (VELF…SKEM), 186 to 219 (ARIK…TEIS), 310 to 347 (TAKF…KVAV), and 356 to 389 (AETY…QTLL). Positions 410-446 (APEVPARPRPSPGAKAAFCAGGRPYSVPGRTRPSAAD) are disordered.

Associated with the EvC complex composed of EFCAB7, IQCE, EVC2 and EVC.

The protein resides in the cell projection. It localises to the cilium. Functionally, participates positively in the ciliary Hedgehog (Hh) signaling. This Bos taurus (Bovine) protein is Tetratricopeptide repeat protein 23 (TTC23).